Reading from the N-terminus, the 150-residue chain is MRPGSTPPSRRKSRPPRRVSPPLPTTSRTSPRRPHAQQQRRASRASPKKRFRPGTRALMEIRKYQKSTELLIRKAPFSRLVREVCMTYACGMNYNWQSMALMALQEASEAFLVRLFEDSYLCSLHAKRVTLYVQDIQLARRIRGVNEGLG.

Positions 1–55 (MRPGSTPPSRRKSRPPRRVSPPLPTTSRTSPRRPHAQQQRRASRASPKKRFRPGT) are disordered. Positions 41–53 (RASRASPKKRFRP) are enriched in basic residues. The H3-like stretch occupies residues 53 to 150 (PGTRALMEIR…RIRGVNEGLG (98 aa)).

It belongs to the histone H3 family. In terms of assembly, component of centromeric nucleosomes, where DNA is wrapped around a histone octamer core. The octamer contains two molecules each of H2A, H2B, CENPA and H4 assembled in one CENPA-H4 heterotetramer and two H2A-H2B heterodimers. CENPA modulates the DNA-binding characteristics of nucleosomes so that protruding DNA ends have higher flexibility than in nucleosomes containing conventional histone H3.

The protein localises to the nucleus. Its subcellular location is the chromosome. It localises to the centromere. In terms of biological role, histone H3-like nucleosomal protein that is specifically found in centromeric nucleosomes. Replaces conventional H3 in the nucleosome core of centromeric chromatin that serves as an assembly site for the inner kinetochore. The presence of CENPA subtly modifies the nucleosome structure and the way DNA is wrapped around the nucleosome and gives rise to protruding DNA ends that are less well-ordered and rigid compared to nucleosomes containing histone H3. May serve as an epigenetic mark that propagates centromere identity through replication and cell division. Required for recruitment and assembly of kinetochore proteins, and as a consequence required for progress through mitosis, chromosome segregation and cytokinesis. This chain is Histone H3-like centromeric protein A (cenpa), found in Xenopus laevis (African clawed frog).